The chain runs to 361 residues: 3-dehydroquinate synthase (361 aa).

NAD(+) is bound by residues 106-110 (GVVGD), 130-131 (TT), K143, and K152. Residues E185, H248, and H265 each coordinate Zn(2+).

It belongs to the sugar phosphate cyclases superfamily. Dehydroquinate synthase family. NAD(+) serves as cofactor. Co(2+) is required as a cofactor. It depends on Zn(2+) as a cofactor.

Its subcellular location is the cytoplasm. It carries out the reaction 7-phospho-2-dehydro-3-deoxy-D-arabino-heptonate = 3-dehydroquinate + phosphate. It participates in metabolic intermediate biosynthesis; chorismate biosynthesis; chorismate from D-erythrose 4-phosphate and phosphoenolpyruvate: step 2/7. Its function is as follows. Catalyzes the conversion of 3-deoxy-D-arabino-heptulosonate 7-phosphate (DAHP) to dehydroquinate (DHQ). This chain is 3-dehydroquinate synthase, found in Leptospira interrogans serogroup Icterohaemorrhagiae serovar copenhageni (strain Fiocruz L1-130).